The sequence spans 308 residues: RNA pseudouridylate synthase domain-containing protein 1 (308 aa).

At M1 the chain carries N-acetylmethionine. The active site involves D67. The disordered stretch occupies residues 257–292 (APDPDPSEGGPGPCSPCTPLPGPGRPPPPPETEVQR). Positions 269-287 (PCSPCTPLPGPGRPPPPPE) are enriched in pro residues.

This sequence belongs to the pseudouridine synthase RluA family.

The protein is RNA pseudouridylate synthase domain-containing protein 1 (RPUSD1) of Bos taurus (Bovine).